The sequence spans 64 residues: Large ribosomal subunit protein uL30 (64 aa).

It belongs to the universal ribosomal protein uL30 family. In terms of assembly, part of the 50S ribosomal subunit.

In Desulforudis audaxviator (strain MP104C), this protein is Large ribosomal subunit protein uL30.